The following is a 475-amino-acid chain: MKMPILPPLPLASRHLLLASAIALAAGCAGLPDQRLAQEALERGDLATAQSNYQALAAMGYADAQVGLADMQVASGDSAQQAKAEKLYREAAQTSPRARARLGKWLAAKPGASDAEHREAERLLSQAFEQGEDSALVPLIVLYLQYPQSWPEIDPQQRIDQWRARGLPQADLAQIILYRTQGTYAQHLGEIEQVCQRWLRRMDVCWYELATVYQMQGNAEKQKVLLEQLRAAYKAGRVPGERVDSVAGVLADGELGQPDPQTAQALLEEIAPSYPAAWVSLAKLLYDYPDQGDLEKMLGYLKNAQDAAQPRAELLLGRLYYDGKWAPQDPRKAERHLLKAAASEPQANYYLGQIYRRGFLGKVYPQKAVDHLILAARAGQASADMALAQLWSQGRGIQPNRVNAYVFGQLAVQQQVPQASDLLGQIEAQLPPAERSQAQQLLKREQQSRGNNWQATVSLLQSQDSPINEEEPESL.

The N-terminal stretch at 1 to 27 (MKMPILPPLPLASRHLLLASAIALAAG) is a signal peptide. Residue cysteine 28 is the site of N-palmitoyl cysteine attachment. A lipid anchor (S-diacylglycerol cysteine) is attached at cysteine 28. Positions 436-475 (SQAQQLLKREQQSRGNNWQATVSLLQSQDSPINEEEPESL) are disordered. A compositionally biased stretch (polar residues) spans 448 to 466 (SRGNNWQATVSLLQSQDSP).

The protein belongs to the AlgK family. As to quaternary structure, interacts with AlgX.

Its subcellular location is the cell outer membrane. Its pathway is glycan biosynthesis; alginate biosynthesis. Its function is as follows. May be involved in the polymerization of mannuronate to alginate. This Pseudomonas aeruginosa (strain ATCC 15692 / DSM 22644 / CIP 104116 / JCM 14847 / LMG 12228 / 1C / PRS 101 / PAO1) protein is Alginate biosynthesis protein AlgK (algK).